A 272-amino-acid chain; its full sequence is Flt3 receptor-interacting lectin (272 aa).

The signal sequence occupies residues 1-8; sequence MFPSKVKS. The alpha-D-mannopyranose site is built by Asp94 and Gly112. N-linked (GlcNAc...) asparagine glycosylation is found at Asn125 and Asn131. Residues Asn152 and 237–238 each bind alpha-D-mannopyranose; that span reads QD.

This sequence belongs to the leguminous lectin family. As to quaternary structure, dimer (alpha/beta)2. Tetramer (alpha/beta)4. Post-translationally, glycosylated at Asn-125 by either a paucimannose type N-glycan (alpha-4) or a single N-acetylglucosamine (alpha-3). Glycosylated at Asn-131 by a paucimannose type N-glycan (alpha-2, alpha-3 and alpha-4). In alpha-2, Asn-125 is deamidated to an Asp, possibly due to the action of intrinsic peptide N-glycosidase (PGNase).

Its subcellular location is the protein storage vacuole lumen. Functionally, mannose-binding lectin. Accommodates most effectively a non-reducing terminal alpha-d-mannosyl unit. Strongly precipitates murine IgM but not IgG. This Lablab purpureus (Hyacinth bean) protein is Flt3 receptor-interacting lectin.